Here is a 289-residue protein sequence, read N- to C-terminus: Acetyl-coenzyme A carboxylase carboxyl transferase subunit beta (289 aa).

A CoA carboxyltransferase N-terminal domain is found at 28-289 (VMTKCPKCKK…QGGEMAVWQS (262 aa)). Residues Cys32, Cys35, Cys51, and Cys54 each coordinate Zn(2+). The segment at 32–54 (CPKCKKIMYTKEVLKNLKVCVNC) adopts a C4-type zinc-finger fold.

Belongs to the AccD/PCCB family. In terms of assembly, acetyl-CoA carboxylase is a heterohexamer composed of biotin carboxyl carrier protein (AccB), biotin carboxylase (AccC) and two subunits each of ACCase subunit alpha (AccA) and ACCase subunit beta (AccD). Zn(2+) serves as cofactor.

It is found in the cytoplasm. The catalysed reaction is N(6)-carboxybiotinyl-L-lysyl-[protein] + acetyl-CoA = N(6)-biotinyl-L-lysyl-[protein] + malonyl-CoA. The protein operates within lipid metabolism; malonyl-CoA biosynthesis; malonyl-CoA from acetyl-CoA: step 1/1. In terms of biological role, component of the acetyl coenzyme A carboxylase (ACC) complex. Biotin carboxylase (BC) catalyzes the carboxylation of biotin on its carrier protein (BCCP) and then the CO(2) group is transferred by the transcarboxylase to acetyl-CoA to form malonyl-CoA. This chain is Acetyl-coenzyme A carboxylase carboxyl transferase subunit beta, found in Bacillus anthracis (strain A0248).